The following is a 295-amino-acid chain: Sulfotransferase 1E1 (295 aa).

48-53 (KSGTTW) is a 3'-phosphoadenylyl sulfate binding site. Substrate is bound at residue 106 to 108 (KTH). His108 functions as the Proton acceptor in the catalytic mechanism. The 3'-phosphoadenylyl sulfate site is built by Arg130 and Ser138. At Ser156 the chain carries Phosphoserine. Residues Tyr193, 227–232 (TSFQEM), and 257–259 (RKG) contribute to the 3'-phosphoadenylyl sulfate site.

This sequence belongs to the sulfotransferase 1 family. In terms of assembly, homodimer. In terms of tissue distribution, testis and at very low level in the placenta.

Its subcellular location is the cytoplasm. The protein resides in the cytosol. The enzyme catalyses estrone + 3'-phosphoadenylyl sulfate = estrone 3-sulfate + adenosine 3',5'-bisphosphate + H(+). The catalysed reaction is 17beta-estradiol + 3'-phosphoadenylyl sulfate = 17beta-estradiol 3-sulfate + adenosine 3',5'-bisphosphate + H(+). It carries out the reaction (24S)-hydroxycholesterol + 3'-phosphoadenylyl sulfate = (24S)-hydroxycholesterol 3-sulfate + adenosine 3',5'-bisphosphate + H(+). It catalyses the reaction 3beta-hydroxyandrost-5-en-17-one + 3'-phosphoadenylyl sulfate = dehydroepiandrosterone 3-sulfate + adenosine 3',5'-bisphosphate + H(+). The enzyme catalyses 4-ethylphenol + 3'-phosphoadenylyl sulfate = 4-ethylphenyl sulfate + adenosine 3',5'-bisphosphate + H(+). With respect to regulation, inhibited by estradiol. Functionally, sulfotransferase that utilizes 3'-phospho-5'-adenylyl sulfate (PAPS) as sulfonate donor to catalyze the sulfate conjugation of estradiol and estrone. Is a key enzyme in estrogen homeostasis, the sulfation of estrogens leads to their inactivation. Also sulfates dehydroepiandrosterone, pregnenolone, (24S)-hydroxycholesterol and xenobiotic compounds like ethinylestradiol, equalenin, diethyl stilbesterol and 1-naphthol at significantly lower efficiency. Does not sulfonate cortisol, testosterone and dopamine. May play a role in gut microbiota-host metabolic interaction. O-sulfonates 4-ethylphenol (4-EP), a dietary tyrosine-derived metabolite produced by gut bacteria. The product 4-EPS crosses the blood-brain barrier and may negatively regulate oligodendrocyte maturation and myelination, affecting the functional connectivity of different brain regions associated with the limbic system. The polypeptide is Sulfotransferase 1E1 (Sult1e1) (Mus musculus (Mouse)).